Consider the following 1042-residue polypeptide: Sarcoplasmic/endoplasmic reticulum calcium ATPase 2 (1042 aa).

At 1–48 (MENAHTKTVEEVLGHFGVNESTGLSLEQVKKLKERWGSNELPAEEGKT) the chain is on the cytoplasmic side. S38 is modified (phosphoserine). The helical transmembrane segment at 49–69 (LLELVIEQFEDLLVRILLLAA) threads the bilayer. Over 70-89 (CISFVLAWFEEGEETITAFV) the chain is Lumenal. The helical transmembrane segment at 90–110 (EPFVILLILVANAIVGVWQER) threads the bilayer. Topologically, residues 111–253 (NAENAIEALK…QERTPLQQKL (143 aa)) are cytoplasmic. A helical transmembrane segment spans residues 254–273 (DEFGEQLSKVISLICIAVWI). Over 274–295 (INIGHFNDPVHGGSWIRGAIYY) the chain is Lumenal. Y294 and Y295 each carry 3'-nitrotyrosine. The chain crosses the membrane as a helical span at residues 296–313 (FKIAVALAVAAIPEGLPA). 4 residues coordinate Ca(2+): V304, A305, I307, and E309. Topologically, residues 314-756 (VITTCLALGT…EEGRAIYNNM (443 aa)) are cytoplasmic. The active-site 4-aspartylphosphate intermediate is D351. 2 residues coordinate Mg(2+): D351 and T353. T353 is an ATP binding site. At T441 the chain carries Phosphothreonine. The ATP site is built by E442, R489, and K514. S531 is modified (phosphoserine). Residue R559 coordinates ATP. Residues 575-594 (MHLKDSANFIKYETNLTFVG) are interaction with HAX1. S580 is subject to Phosphoserine. 3 residues coordinate ATP: T624, G625, and D626. Phosphoserine is present on S663. ATP contacts are provided by R677 and K683. D702 provides a ligand contact to Mg(2+). N705 contributes to the ATP binding site. Residues 757-776 (KQFIRYLISSNVGEVVCIFL) form a helical membrane-spanning segment. Residues N767 and E770 each contribute to the Ca(2+) site. At 777 to 786 (TAALGFPEAL) the chain is on the lumenal side. Residues 787–807 (IPVQLLWVNLVTDGLPATALG) traverse the membrane as a helical segment. Positions 787–807 (IPVQLLWVNLVTDGLPATALG) are interaction with PLN. An interaction with TMEM64 and PDIA3 region spans residues 788–1042 (PVQLLWVNLV…DTNFSDLLWS (255 aa)). Residues N795, T798, and D799 each contribute to the Ca(2+) site. Topologically, residues 808 to 827 (FNPPDLDIMNKPPRNPKEPL) are cytoplasmic. The chain crosses the membrane as a helical span at residues 828–850 (ISGWLFFRYLAIGCYVGAATVGA). The Lumenal segment spans residues 851–896 (AAWWFIAADGGPRVSFYQLSHFLQCKEDNPDFEGVDCAIFESPYPM). An intrachain disulfide couples C875 to C887. A helical membrane pass occupies residues 897-916 (TMALSVLVTIEMCNALNSLS). E907 contacts Ca(2+). At 917–929 (ENQSLLRMPPWEN) the chain is on the cytoplasmic side. Residues 930–948 (IWLVGSICLSMSLHFLILY) form a helical membrane-spanning segment. The tract at residues 931–942 (WLVGSICLSMSL) is interaction with PLN. Over 949 to 963 (VEPLPLIFQITPLNV) the chain is Lumenal. Residues 964-984 (TQWLMVLKISLPVILMDETLK) traverse the membrane as a helical segment. Over 985–1042 (FVARNYLEPGKECVQPAPQSCSLWACTEGVSWPFVLLIVPLVMWVYSTDTNFSDLLWS) the chain is Cytoplasmic.

This sequence belongs to the cation transport ATPase (P-type) (TC 3.A.3) family. Type IIA subfamily. Interacts with sarcolipin (SLN); the interaction inhibits ATP2A2 Ca(2+) affinity. Interacts with phospholamban (PLN); the interaction inhibits ATP2A2 Ca(2+) affinity. Interacts with myoregulin (MRLN). Interacts with ARLN and ERLN; the interactions inhibit ATP2A2 Ca(2+) affinity. Interacts with SRTIT1/DWORF; the interaction results in activation of ATP2A2. Interacts with the monomeric forms of SLN, PLN, ARLN, ERLN and STRI1/DWORF. Interacts with HAX1. Interacts with S100A8 and S100A9. Interacts with SLC35G1 and STIM1. Interacts with TMEM203. Interacts with TMEM64 and PDIA3. Interacts with TMX1. Interacts with TMX2. Interacts with VMP1; VMP1 competes with PLN and SLN to prevent them from forming an inhibitory complex with ATP2A2. Interacts with ULK1. Interacts with TUNAR. Interacts with FLVCR2; this interaction occurs in the absence of heme and promotes ATP2A2 proteasomal degradation; this complex is dissociated upon heme binding. Interacts with FNIP1. As to quaternary structure, interacts with TRAM2 (via C-terminus). Requires Mg(2+) as cofactor. In terms of processing, nitrated under oxidative stress. Nitration on the two tyrosine residues inhibits catalytic activity. Serotonylated on Gln residues by TGM2 in response to hypoxia, leading to its inactivation. As to expression, isoform 2 is highly expressed in heart and slow twitch skeletal muscle. Isoform 1 is widely expressed.

It localises to the endoplasmic reticulum membrane. Its subcellular location is the sarcoplasmic reticulum membrane. The catalysed reaction is Ca(2+)(in) + ATP + H2O = Ca(2+)(out) + ADP + phosphate + H(+). Its activity is regulated as follows. Has different conformational states with differential Ca2+ affinity. The E1 conformational state (active form) shows high Ca(2+) affinity, while the E2 state exhibits low Ca(2+) affinity. Binding of ATP allosterically increases its affinity for subsequent binding of Ca2+. Reversibly inhibited by phospholamban (PLN) at low calcium concentrations. PLN inhibits ATP2A2 Ca(2+) affinity by disrupting its allosteric activation by ATP. Inhibited by sarcolipin (SLN) and myoregulin (MRLN). The inhibition is blocked by VMP1. Enhanced by STRIT1/DWORF; STRIT1 increases activity by displacing sarcolipin (SLN), phospholamban (PLN) and myoregulin (MRLN). Stabilizes SERCA2 in its E2 state. Its function is as follows. This magnesium-dependent enzyme catalyzes the hydrolysis of ATP coupled with the translocation of calcium from the cytosol to the sarcoplasmic reticulum lumen. Involved in autophagy in response to starvation. Upon interaction with VMP1 and activation, controls ER-isolation membrane contacts for autophagosome formation. Also modulates ER contacts with lipid droplets, mitochondria and endosomes. In coordination with FLVCR2 mediates heme-stimulated switching from mitochondrial ATP synthesis to thermogenesis. In terms of biological role, involved in the regulation of the contraction/relaxation cycle. Acts as a regulator of TNFSF11-mediated Ca(2+) signaling pathways via its interaction with TMEM64 which is critical for the TNFSF11-induced CREB1 activation and mitochondrial ROS generation necessary for proper osteoclast generation. Association between TMEM64 and SERCA2 in the ER leads to cytosolic Ca(2+) spiking for activation of NFATC1 and production of mitochondrial ROS, thereby triggering Ca(2+) signaling cascades that promote osteoclast differentiation and activation. The protein is Sarcoplasmic/endoplasmic reticulum calcium ATPase 2 (ATP2A2) of Oryctolagus cuniculus (Rabbit).